Consider the following 244-residue polypeptide: INO80 complex subunit E (244 aa).

Residues D10–L54 adopt a coiled-coil conformation. Disordered regions lie at residues Q59 to F187 and F222 to E244. 2 stretches are compositionally biased toward low complexity: residues P99–S115 and A122–P136. The span at R157–K171 shows a compositional bias: basic residues. Glycyl lysine isopeptide (Lys-Gly) (interchain with G-Cter in SUMO2) cross-links involve residues K159 and K171. Acidic residues predominate over residues D230–E244.

In terms of assembly, component of the chromatin remodeling INO80 complex; specifically part of a complex module associated with the N-terminus of INO80.

It localises to the nucleus. Its function is as follows. Putative regulatory component of the chromatin remodeling INO80 complex which is involved in transcriptional regulation, DNA replication and probably DNA repair. This Bos taurus (Bovine) protein is INO80 complex subunit E (INO80E).